A 217-amino-acid polypeptide reads, in one-letter code: Protein canopy 4 (217 aa).

An N-terminal signal peptide occupies residues 1–27 (MEMFTVFLFYMFSLVLANQEERLPNKC). 3 disulfides stabilise this stretch: C27–C185, C30–C173, and C83–C145. The interval 194–217 (MGMKGSEEESEGKDGKETHDAGEL) is disordered. Positions 205 to 217 (GKDGKETHDAGEL) are enriched in basic and acidic residues.

It belongs to the canopy family.

Its subcellular location is the secreted. The chain is Protein canopy 4 (cnpy4) from Danio rerio (Zebrafish).